A 354-amino-acid chain; its full sequence is Phosphate acyltransferase (354 aa).

Belongs to the PlsX family. Homodimer. Probably interacts with PlsY.

The protein resides in the cytoplasm. The enzyme catalyses a fatty acyl-[ACP] + phosphate = an acyl phosphate + holo-[ACP]. It functions in the pathway lipid metabolism; phospholipid metabolism. Its function is as follows. Catalyzes the reversible formation of acyl-phosphate (acyl-PO(4)) from acyl-[acyl-carrier-protein] (acyl-ACP). This enzyme utilizes acyl-ACP as fatty acyl donor, but not acyl-CoA. In Bordetella petrii (strain ATCC BAA-461 / DSM 12804 / CCUG 43448), this protein is Phosphate acyltransferase.